We begin with the raw amino-acid sequence, 182 residues long: Large ribosomal subunit protein uL6 (182 aa).

It belongs to the universal ribosomal protein uL6 family. As to quaternary structure, part of the 50S ribosomal subunit.

Functionally, this protein binds to the 23S rRNA, and is important in its secondary structure. It is located near the subunit interface in the base of the L7/L12 stalk, and near the tRNA binding site of the peptidyltransferase center. The polypeptide is Large ribosomal subunit protein uL6 (Methanococcus maripaludis (strain C5 / ATCC BAA-1333)).